The following is a 253-amino-acid chain: Isopentenyl-diphosphate delta-isomerase IDI1 (253 aa).

Lys-61 provides a ligand contact to substrate. The Mg(2+) site is built by His-65 and His-76. In terms of domain architecture, Nudix hydrolase spans 74-224 (LLHRAFSVFL…SLVFTPWFKL (151 aa)). 2 residues coordinate substrate: Gln-94 and Lys-99. Residue Cys-111 is part of the active site. Ser-112 contributes to the substrate binding site. Residues 112 to 145 (SHPLHIPTETGSTLEDSIAGVKRAAQRKLEHELG) carry the Nudix box motif. Residues Glu-174 and Glu-176 each coordinate Mg(2+). Glu-176 is an active-site residue.

Belongs to the IPP isomerase type 1 family. Mg(2+) serves as cofactor.

The enzyme catalyses isopentenyl diphosphate = dimethylallyl diphosphate. It participates in isoprenoid biosynthesis; dimethylallyl diphosphate biosynthesis; dimethylallyl diphosphate from isopentenyl diphosphate: step 1/1. Functionally, isopentenyl-diphosphate delta-isomerase; part of the second module of ergosterol biosynthesis pathway that includes the middle steps of the pathway. IDI1 catalyzes the 1,3-allylic rearrangement of isopentenyl (IPP) to its highly electrophilic allylic isomer, dimethylallyl diphosphate (DMAPP). The second module is carried out in the vacuole and involves the formation of farnesyl diphosphate, which is also an important intermediate in the biosynthesis of ubiquinone, dolichol, heme and prenylated proteins. Activity by the mevalonate kinase ERG12 (FG05912) first converts mevalonate into 5-phosphomevalonate. 5-phosphomevalonate is then further converted to 5-diphosphomevalonate by the phosphomevalonate kinase ERG8 (FG09764). The diphosphomevalonate decarboxylase ERG19 (FG10424) then produces isopentenyl diphosphate. The isopentenyl-diphosphate delta-isomerase IDI1 (FG09722) then catalyzes the 1,3-allylic rearrangement of the homoallylic substrate isopentenyl (IPP) to its highly electrophilic allylic isomer, dimethylallyl diphosphate (DMAPP). Finally the farnesyl diphosphate synthase ERG20 (FG06784) catalyzes the sequential condensation of isopentenyl pyrophosphate with dimethylallyl pyrophosphate, and then with the resultant geranylpyrophosphate to the ultimate product farnesyl pyrophosphate. This Gibberella zeae (strain ATCC MYA-4620 / CBS 123657 / FGSC 9075 / NRRL 31084 / PH-1) (Wheat head blight fungus) protein is Isopentenyl-diphosphate delta-isomerase IDI1.